Here is a 512-residue protein sequence, read N- to C-terminus: Probable metalloreductase AIM14 (512 aa).

Transmembrane regions (helical) follow at residues 20–40, 61–81, 97–117, 132–152, 161–181, 191–211, and 218–235; these read IKYG…ILIC, PLFI…VFHV, MSYA…SIGL, VIIA…ILEG, LWNF…IISL, YFYV…CLHA, and YAIA…ERYA. The region spanning 94–206 is the Ferric oxidoreductase domain; the sequence is FGRMSYALLP…NITVWLFVGL (113 aa). In terms of domain architecture, FAD-binding FR-type spans 230 to 355; sequence IFERYAKSHS…GGSGISFALP (126 aa). Residues 427–436 show a composition bias toward low complexity; it reads ESLPSSETPS. The tract at residues 427–451 is disordered; it reads ESLPSSETPSRTVNDDSLSQDTRPK. Residues 437 to 447 are compositionally biased toward polar residues; the sequence is RTVNDDSLSQD.

Belongs to the ferric reductase (FRE) family. AIM14 subfamily.

It localises to the membrane. Its function is as follows. Probable cell surface metalloreductase. May be involved in iron or copper homeostasis. This Debaryomyces hansenii (strain ATCC 36239 / CBS 767 / BCRC 21394 / JCM 1990 / NBRC 0083 / IGC 2968) (Yeast) protein is Probable metalloreductase AIM14 (AIM14).